The sequence spans 901 residues: MADSSPASFLTQADALLRKNLVFQKRNIWSNIRLITIPFFLCLLLLVIQMLFDTQFNDVHGQCGCNEKTCGLRYSTSEQAAFCAIPNPPQWTPLLQIPAPEYRAAIPYPSHTSPATFLFTGNNQSLGNILMGNMYSNSSGFDGDLAYYVLGSSSFPAYTNHMDSAFISDLPIYNIQHECSPNSSFSILIHQSPLAFPKEVNCVQGLNLWRNSSSDVNNELFKGYRKGNPDKKINEFAGAFDFQNTNGNNLNVSVWYNSTYKNDTVVRPMALIRVPRLVNLASNAYLEFLKGSETKILFEYVKEMPKPETKLSLDIASLIGPLFFTWVILLLFPVILTTLVYEKQQRLRIMMKMHGLGDVPYWIVSYTYFLLISILYMLCFAIFGSLIGLNFFRLNDYSIQLVFFFICINLQISVAFLASAMFSDVKTATVIAYIYVFGTGLLGIFLFQFFLEDPLFPRGWIIAMELYPGFSLYRGLYELSQSAFAGDYRGIDGMKWRDFGNGMKEVTCIMLIEWLLLLGLAYYIDQIIYSRKHPLFFLLQSTSKKKQHFSDNKISKVVVEMEKPDVCREREKVEQCLLKSTRDSAVLCNNLKKVYSGKDGNPQKLAVRGLSLALPQGECFGMLGPNGAGKTSFINMMTGIIKPSSGTAFVQGLDILTDMDRIYTTIGVCPQHDLLWEKLSGREHLLFYGRLKNLKGSVLTQAVEESLRSVNLFHGGIGDKQVSKYSGGMKRRLSVAISLIGSPKVVYMDEPSTGLDPASRKSLWDVVKRAKRKGAIILTTHSMEEAEILCDRIGIFVDGSLQCIGNPKELKSRYGGSYVLTVTTSEEHEKEVEQLVHNISTNAKKIYRTAGTQKFELPKQEVKIGEVFKALEKAKTMFPVVAWGLADTTLEDVFIKVAQTS.

Helical transmembrane passes span 34–54 (LITI…LFDT), 315–335 (IASL…FPVI), 369–389 (FLLI…LIGL), 402–422 (VFFF…SAMF), 427–447 (TATV…IFLF), 460–477 (WIIA…RGLY), and 508–528 (CIML…DQII). One can recognise an ABC transporter domain in the interval 586 to 823 (VLCNNLKKVY…YGGSYVLTVT (238 aa)). 624 to 631 (GPNGAGKT) contacts ATP.

Belongs to the ABC transporter superfamily. ABCA family. CPR flippase (TC 3.A.1.211) subfamily.

The protein localises to the membrane. This is ABC transporter A family member 8 (ABCA8) from Arabidopsis thaliana (Mouse-ear cress).